A 73-amino-acid polypeptide reads, in one-letter code: Large ribosomal subunit protein bL31 (73 aa).

Cysteine 16, cysteine 18, cysteine 38, and cysteine 41 together coordinate Zn(2+).

This sequence belongs to the bacterial ribosomal protein bL31 family. Type A subfamily. Part of the 50S ribosomal subunit. The cofactor is Zn(2+).

Binds the 23S rRNA. The sequence is that of Large ribosomal subunit protein bL31 from Vibrio vulnificus (strain CMCP6).